The primary structure comprises 396 residues: L-aspartate--glyoxylate aminotransferase (396 aa).

Residue Lys196 is modified to N6-(pyridoxal phosphate)lysine.

The protein belongs to the class-V pyridoxal-phosphate-dependent aminotransferase family. Pyridoxal 5'-phosphate serves as cofactor.

It catalyses the reaction oxaloacetate + glycine = glyoxylate + L-aspartate. Its function is as follows. Catalyzes the transamination of glyoxylate into glycine using L-aspartate as the preferred amino group donor. Is essential for the growth of P.denitrificans in the presence of glycolate and glyoxylate since it functions in glyoxylate assimilation via the beta-hydroxyaspartate cycle (BHAC). Can catalyze the reverse reaction in vitro, and also use L-serine and L-glutamate as amino group donor, but with much less efficiency than L-aspartate. This is L-aspartate--glyoxylate aminotransferase from Paracoccus denitrificans (strain Pd 1222).